The chain runs to 310 residues: Formimidoylglutamase (310 aa).

Residues His120, Asp148, His150, Asp152, Asp233, and Asp235 each contribute to the Mn(2+) site.

Belongs to the arginase family. Requires Mn(2+) as cofactor.

The enzyme catalyses N-formimidoyl-L-glutamate + H2O = formamide + L-glutamate. It participates in amino-acid degradation; L-histidine degradation into L-glutamate; L-glutamate from N-formimidoyl-L-glutamate (hydrolase route): step 1/1. Catalyzes the conversion of N-formimidoyl-L-glutamate to L-glutamate and formamide. This Nocardia farcinica (strain IFM 10152) protein is Formimidoylglutamase.